The following is a 227-amino-acid chain: PKHD-type hydroxylase Bphyt_7102 (227 aa).

One can recognise a Fe2OG dioxygenase domain in the interval 80 to 179 (QVYPPLFNRY…RIASFFWVQS (100 aa)). His98, Asp100, and His160 together coordinate Fe cation. Arg170 serves as a coordination point for 2-oxoglutarate.

It depends on Fe(2+) as a cofactor. L-ascorbate serves as cofactor.

In Paraburkholderia phytofirmans (strain DSM 17436 / LMG 22146 / PsJN) (Burkholderia phytofirmans), this protein is PKHD-type hydroxylase Bphyt_7102.